The primary structure comprises 304 residues: MGLAAPRKKTKISHDPNNTSWSRSTDGFGHRILKAQGWTPGDFLGARNATHSDLFTTASASHIRVVLKDDTLGLGARPKRDLLDGPTGLDAFKGLLGRLNGKSDTQLEAEQQKRDDAKLARYAATKWQTVRFISGGLLVQEKDNATASPASQDLRVDFPRETSSNEHENGMFKTEPMDSYSHQEGCATAREEEGKKKKKKNKKGKEMDMSPRKSREKKQEKIQKKRKIGDCDRLDTETADRTSTKVLVAVANDKGTSLLASNGPSTSRERQPMGRRIFRSRHIEQKKRALMDDKSLNEIFMIKT.

The span at 1–11 (MGLAAPRKKTK) shows a compositional bias: basic residues. Disordered stretches follow at residues 1-25 (MGLAAPRKKTKISHDPNNTSWSRST), 144-238 (NATA…DTET), and 256-276 (TSLLASNGPSTSRERQPMGRR). Positions 15–25 (DPNNTSWSRST) are enriched in polar residues. Residues 25-79 (TDGFGHRILKAQGWTPGDFLGARNATHSDLFTTASASHIRVVLKDDTLGLGARPK) enclose the G-patch domain. Composition is skewed to basic and acidic residues over residues 154 to 170 (LRVDFPRETSSNEHENG) and 204 to 238 (GKEMDMSPRKSREKKQEKIQKKRKIGDCDRLDTET). The segment covering 256–266 (TSLLASNGPST) has biased composition (polar residues).

It belongs to the PINX1 family.

The protein resides in the nucleus. Its subcellular location is the nucleolus. Its function is as follows. Involved in rRNA-processing at A0, A1 and A2 sites and negatively regulates telomerase. In Aspergillus fumigatus (strain ATCC MYA-4609 / CBS 101355 / FGSC A1100 / Af293) (Neosartorya fumigata), this protein is Protein pxr1 (pxr1).